A 666-amino-acid chain; its full sequence is Protein SLY1 (666 aa).

4 repeat units span residues 106–142 (KENI…DLAQ), 220–257 (KGGP…DSLE), 436–474 (LDIL…QNVE), and 478–514 (KEND…DGSD). The 4 X approximate repeats stretch occupies residues 106-514 (KENIDIIVND…QNKSLEDGSD (409 aa)).

This sequence belongs to the STXBP/unc-18/SEC1 family. In terms of assembly, interacts with SED5.

It is found in the cytoplasm. Its subcellular location is the membrane. Able to suppress the functional loss of YPT1. SLY1 is essential for cell viability. May interact indirectly, or directly with YPT1. This chain is Protein SLY1 (SLY1), found in Saccharomyces cerevisiae (strain ATCC 204508 / S288c) (Baker's yeast).